Reading from the N-terminus, the 90-residue chain is Probable Fe(2+)-trafficking protein (90 aa).

Belongs to the Fe(2+)-trafficking protein family. As to quaternary structure, monomer.

Its function is as follows. Could be a mediator in iron transactions between iron acquisition and iron-requiring processes, such as synthesis and/or repair of Fe-S clusters in biosynthetic enzymes. This Yersinia enterocolitica serotype O:8 / biotype 1B (strain NCTC 13174 / 8081) protein is Probable Fe(2+)-trafficking protein.